Reading from the N-terminus, the 363-residue chain is tRNA (guanine(26)-N(2))-dimethyltransferase (363 aa).

One can recognise a Trm1 methyltransferase domain in the interval 5–352 (VLRREGGVKF…GEYGEVLMAF (348 aa)). The S-adenosyl-L-methionine site is built by arginine 40, arginine 67, aspartate 85, aspartate 111, and alanine 112.

Belongs to the class I-like SAM-binding methyltransferase superfamily. Trm1 family.

It carries out the reaction guanosine(26) in tRNA + 2 S-adenosyl-L-methionine = N(2)-dimethylguanosine(26) in tRNA + 2 S-adenosyl-L-homocysteine + 2 H(+). In terms of biological role, dimethylates a single guanine residue at position 26 of a number of tRNAs using S-adenosyl-L-methionine as donor of the methyl groups. The chain is tRNA (guanine(26)-N(2))-dimethyltransferase from Pyrobaculum aerophilum (strain ATCC 51768 / DSM 7523 / JCM 9630 / CIP 104966 / NBRC 100827 / IM2).